The sequence spans 293 residues: Probable endonuclease 4 (293 aa).

Zn(2+) is bound by residues His-75, His-115, Glu-153, Asp-187, His-190, His-224, Asp-237, His-239, and Glu-269.

This sequence belongs to the AP endonuclease 2 family. Requires Zn(2+) as cofactor.

It catalyses the reaction Endonucleolytic cleavage to 5'-phosphooligonucleotide end-products.. In terms of biological role, endonuclease IV plays a role in DNA repair. It cleaves phosphodiester bonds at apurinic or apyrimidinic (AP) sites, generating a 3'-hydroxyl group and a 5'-terminal sugar phosphate. The chain is Probable endonuclease 4 from Chlamydia pneumoniae (Chlamydophila pneumoniae).